Here is a 444-residue protein sequence, read N- to C-terminus: uncharacterized protein (444 aa).

A chloroplast-targeting transit peptide spans 1-72 (MGFLTAAIRV…RPMWNVSFLR (72 aa)). Residues 77–107 (HSTPARETGDDDISKSENSSSQDGDSCTKLK) form a disordered region. Residues 92 to 101 (SENSSSQDGD) are compositionally biased toward polar residues. The region spanning 175–272 (EILTPEEHFY…KNYVQPPTEI (98 aa)) is the CRM domain. Positions 292–355 (DALRAVRKYI…CLEDEQEEDE (64 aa)) form a coiled coil. Disordered stretches follow at residues 344 to 364 (EECLEDEQEEDEAGLELATDS) and 392 to 426 (KFPAINNREDEDFGDLGKAKSEGEENDDDKSPNFD). The segment covering 346 to 357 (CLEDEQEEDEAG) has biased composition (acidic residues). Over residues 406–426 (DLGKAKSEGEENDDDKSPNFD) the composition is skewed to basic and acidic residues.

It localises to the plastid. The protein resides in the chloroplast. This is an uncharacterized protein from Arabidopsis thaliana (Mouse-ear cress).